Here is an 837-residue protein sequence, read N- to C-terminus: Periplasmic nitrate reductase (837 aa).

A signal peptide (tat-type signal) is located at residues 1-33 (MTTPKLDRRQVLKLEAAAMAALAGGIAMPAAAA). The 4Fe-4S Mo/W bis-MGD-type domain occupies 44–100 (LKWDKAACRFCGTGCSVMVATKENRVVATHGDTKSEVNRGLNCVKGYFLSKIMYGHD). [4Fe-4S] cluster-binding residues include C51, C54, C58, and C86. Residues K88, Q155, N180, C184, 217 to 224 (WGSNMAEM), 248 to 252 (STFEH), 267 to 269 (QTD), M378, Q382, N488, 514 to 515 (SD), K537, D564, and 724 to 733 (TGRVLEHWHS) contribute to the Mo-bis(molybdopterin guanine dinucleotide) site. Substrate is bound at residue W800. Mo-bis(molybdopterin guanine dinucleotide) contacts are provided by N808 and K825.

The protein belongs to the prokaryotic molybdopterin-containing oxidoreductase family. NasA/NapA/NarB subfamily. In terms of assembly, component of the periplasmic nitrate reductase NapAB complex composed of NapA and NapB. The cofactor is [4Fe-4S] cluster. It depends on Mo-bis(molybdopterin guanine dinucleotide) as a cofactor. Post-translationally, predicted to be exported by the Tat system. The position of the signal peptide cleavage has not been experimentally proven.

The protein localises to the periplasm. It carries out the reaction 2 Fe(II)-[cytochrome] + nitrate + 2 H(+) = 2 Fe(III)-[cytochrome] + nitrite + H2O. Its function is as follows. Catalytic subunit of the periplasmic nitrate reductase complex NapAB. Receives electrons from NapB and catalyzes the reduction of nitrate to nitrite. The sequence is that of Periplasmic nitrate reductase from Rhodopseudomonas palustris (strain BisB18).